The chain runs to 213 residues: MAAPAVSGVSQQVRYFGTSVVRPFAKLVRPPVQVYGVEGRYATALYSAASKQKKLEQVEKELLRVAQILKEPKVAASVLNPYVKHSIKVKSLSDIIAKERFSPLTTNLINLLAENGRLSNTQGVVSAFSTMMSVHRGEVPCTVTTASPLEEATLSELKTVLKSFLSQGQILKLEVKTDPSIMGGMIVRIGEKYVDMSAKTKIQKLSKAMREVI.

The N-terminal 23 residues, 1–23 (MAAPAVSGVSQQVRYFGTSVVRP), are a transit peptide targeting the mitochondrion. Positions 5–23 (AVSGVSQQVRYFGTSVVRP) match the SIFI-degron motif. Lys-54, Lys-60, Lys-70, and Lys-73 each carry N6-acetyllysine. Lys-90 carries the N6-succinyllysine modification. Lys-158 and Lys-162 each carry N6-acetyllysine; alternate. N6-succinyllysine; alternate occurs at positions 158 and 162. N6-acetyllysine occurs at positions 172, 176, and 192. At Lys-199 the chain carries N6-succinyllysine.

Belongs to the ATPase delta chain family. Component of the ATP synthase complex composed at least of ATP5F1A/subunit alpha, ATP5F1B/subunit beta, ATP5MC1/subunit c (homooctomer), MT-ATP6/subunit a, MT-ATP8/subunit 8, ATP5ME/subunit e, ATP5MF/subunit f, ATP5MG/subunit g, ATP5MK/subunit k, ATP5MJ/subunit j, ATP5F1C/subunit gamma, ATP5F1D/subunit delta, ATP5F1E/subunit epsilon, ATP5PF/subunit F6, ATP5PB/subunit b, ATP5PD/subunit d, ATP5PO/subunit OSCP. ATP synthase complex consists of a soluble F(1) head domain (subunits alpha(3) and beta(3)) - the catalytic core - and a membrane F(0) domain - the membrane proton channel (subunits c, a, 8, e, f, g, k and j). These two domains are linked by a central stalk (subunits gamma, delta, and epsilon) rotating inside the F1 region and a stationary peripheral stalk (subunits F6, b, d, and OSCP). In terms of processing, acetylation at Lys-162 decreases ATP production. Deacetylated by SIRT3. In response to mitochondrial stress, the precursor protein is ubiquitinated by the SIFI complex in the cytoplasm before mitochondrial import, leading to its degradation. Within the SIFI complex, UBR4 initiates ubiquitin chain that are further elongated or branched by KCMF1.

It localises to the mitochondrion. The protein resides in the mitochondrion inner membrane. Its function is as follows. Subunit OSCP, of the mitochondrial membrane ATP synthase complex (F(1)F(0) ATP synthase or Complex V) that produces ATP from ADP in the presence of a proton gradient across the membrane which is generated by electron transport complexes of the respiratory chain. ATP synthase complex consist of a soluble F(1) head domain - the catalytic core - and a membrane F(1) domain - the membrane proton channel. These two domains are linked by a central stalk rotating inside the F(1) region and a stationary peripheral stalk. During catalysis, ATP synthesis in the catalytic domain of F(1) is coupled via a rotary mechanism of the central stalk subunits to proton translocation. In vivo, can only synthesize ATP although its ATP hydrolase activity can be activated artificially in vitro. Part of the complex F(0) domain. Part of the complex F(0) domain and the peripheric stalk, which acts as a stator to hold the catalytic alpha(3)beta(3) subcomplex and subunit a/ATP6 static relative to the rotary elements. In Callithrix jacchus (White-tufted-ear marmoset), this protein is ATP synthase peripheral stalk subunit OSCP, mitochondrial.